Consider the following 188-residue polypeptide: Large ribosomal subunit protein uL10 (188 aa).

Belongs to the universal ribosomal protein uL10 family. In terms of assembly, part of the ribosomal stalk of the 50S ribosomal subunit. The N-terminus interacts with L11 and the large rRNA to form the base of the stalk. The C-terminus forms an elongated spine to which L12 dimers bind in a sequential fashion forming a multimeric L10(L12)X complex.

In terms of biological role, forms part of the ribosomal stalk, playing a central role in the interaction of the ribosome with GTP-bound translation factors. The polypeptide is Large ribosomal subunit protein uL10 (Crocosphaera subtropica (strain ATCC 51142 / BH68) (Cyanothece sp. (strain ATCC 51142))).